A 150-amino-acid chain; its full sequence is MDHRVSVQKEDFSVAQEYEALAQGSQAGAVVTFVGKVRDMNLGDNVVGLHLEHYPGMTEKSLLEICDMAQERWPLQRVRVIHRIGDMLSGDQIVLVGVSSAHRNAAFAACEFIMDYLKTRAPFWKKELTTEASRWIDSRDSDHQAAQRWE.

Substrate is bound by residues 36-38 (KVR), 102-103 (HR), K118, and 125-127 (KKE).

It belongs to the MoaE family. Heterotetramer of 2 MoaD subunits and 2 MoaE subunits. Also stable as homodimer. The enzyme changes between these two forms during catalysis.

The catalysed reaction is 2 [molybdopterin-synthase sulfur-carrier protein]-C-terminal-Gly-aminoethanethioate + cyclic pyranopterin phosphate + H2O = molybdopterin + 2 [molybdopterin-synthase sulfur-carrier protein]-C-terminal Gly-Gly + 2 H(+). It functions in the pathway cofactor biosynthesis; molybdopterin biosynthesis. Functionally, converts molybdopterin precursor Z into molybdopterin. This requires the incorporation of two sulfur atoms into precursor Z to generate a dithiolene group. The sulfur is provided by MoaD. The polypeptide is Molybdopterin synthase catalytic subunit (moaE) (Vibrio cholerae serotype O1 (strain ATCC 39315 / El Tor Inaba N16961)).